Reading from the N-terminus, the 353-residue chain is 4-hydroxy-3-methylbut-2-en-1-yl diphosphate synthase (flavodoxin) (353 aa).

[4Fe-4S] cluster contacts are provided by C268, C271, C303, and E310.

This sequence belongs to the IspG family. [4Fe-4S] cluster serves as cofactor.

The catalysed reaction is (2E)-4-hydroxy-3-methylbut-2-enyl diphosphate + oxidized [flavodoxin] + H2O + 2 H(+) = 2-C-methyl-D-erythritol 2,4-cyclic diphosphate + reduced [flavodoxin]. It functions in the pathway isoprenoid biosynthesis; isopentenyl diphosphate biosynthesis via DXP pathway; isopentenyl diphosphate from 1-deoxy-D-xylulose 5-phosphate: step 5/6. Functionally, converts 2C-methyl-D-erythritol 2,4-cyclodiphosphate (ME-2,4cPP) into 1-hydroxy-2-methyl-2-(E)-butenyl 4-diphosphate. In Ruminiclostridium cellulolyticum (strain ATCC 35319 / DSM 5812 / JCM 6584 / H10) (Clostridium cellulolyticum), this protein is 4-hydroxy-3-methylbut-2-en-1-yl diphosphate synthase (flavodoxin).